The following is a 612-amino-acid chain: UvrABC system protein C (612 aa).

The GIY-YIG domain maps to Thr20–Ile98. The UVR domain maps to Ser208 to Leu243.

Belongs to the UvrC family. Interacts with UvrB in an incision complex.

The protein localises to the cytoplasm. Functionally, the UvrABC repair system catalyzes the recognition and processing of DNA lesions. UvrC both incises the 5' and 3' sides of the lesion. The N-terminal half is responsible for the 3' incision and the C-terminal half is responsible for the 5' incision. This chain is UvrABC system protein C, found in Francisella philomiragia subsp. philomiragia (strain ATCC 25017 / CCUG 19701 / FSC 153 / O#319-036).